We begin with the raw amino-acid sequence, 439 residues long: Xylose isomerase (439 aa).

Active-site residues include histidine 101 and aspartate 104. Mg(2+)-binding residues include glutamate 232, glutamate 268, histidine 271, aspartate 296, aspartate 307, aspartate 309, and aspartate 339.

The protein belongs to the xylose isomerase family. In terms of assembly, homotetramer. Requires Mg(2+) as cofactor.

It is found in the cytoplasm. It carries out the reaction alpha-D-xylose = alpha-D-xylulofuranose. The polypeptide is Xylose isomerase (Actinobacillus pleuropneumoniae serotype 5b (strain L20)).